The following is a 509-amino-acid chain: ATP synthase subunit alpha 1 (509 aa).

172 to 179 (GDRQTGKT) is an ATP binding site.

The protein belongs to the ATPase alpha/beta chains family. As to quaternary structure, F-type ATPases have 2 components, CF(1) - the catalytic core - and CF(0) - the membrane proton channel. CF(1) has five subunits: alpha(3), beta(3), gamma(1), delta(1), epsilon(1). CF(0) has four main subunits: a(1), b(1), b'(1) and c(9-12).

The protein resides in the cell inner membrane. It carries out the reaction ATP + H2O + 4 H(+)(in) = ADP + phosphate + 5 H(+)(out). In terms of biological role, produces ATP from ADP in the presence of a proton gradient across the membrane. The alpha chain is a regulatory subunit. The chain is ATP synthase subunit alpha 1 from Dinoroseobacter shibae (strain DSM 16493 / NCIMB 14021 / DFL 12).